The following is a 348-amino-acid chain: UPF0324 membrane protein BPP3732 (348 aa).

Helical transmembrane passes span 20 to 39, 43 to 62, 98 to 120, 135 to 157, 164 to 186, 196 to 215, 235 to 257, 267 to 286, 299 to 318, and 322 to 344; these read GILF…DLPF, FGFS…GNFL, IAAV…LLIG, AMLT…EPTL, SAVA…PVIY, QALG…VVGA, VALL…AAGA, VPWF…LDIL, VFVL…FAQI, and GPRV…YGIV.

It belongs to the UPF0324 family.

The protein resides in the cell membrane. This Bordetella parapertussis (strain 12822 / ATCC BAA-587 / NCTC 13253) protein is UPF0324 membrane protein BPP3732.